Here is a 156-residue protein sequence, read N- to C-terminus: Endoribonuclease YbeY (156 aa).

3 residues coordinate Zn(2+): histidine 119, histidine 123, and histidine 129.

It belongs to the endoribonuclease YbeY family. Zn(2+) is required as a cofactor.

It is found in the cytoplasm. In terms of biological role, single strand-specific metallo-endoribonuclease involved in late-stage 70S ribosome quality control and in maturation of the 3' terminus of the 16S rRNA. In Buchnera aphidicola subsp. Cinara cedri (strain Cc), this protein is Endoribonuclease YbeY.